The primary structure comprises 505 residues: Histidine ammonia-lyase (505 aa).

The 5-imidazolinone (Ala-Gly) cross-link spans 141-143 (ASG). Residue S142 is modified to 2,3-didehydroalanine (Ser).

This sequence belongs to the PAL/histidase family. Post-translationally, contains an active site 4-methylidene-imidazol-5-one (MIO), which is formed autocatalytically by cyclization and dehydration of residues Ala-Ser-Gly.

It localises to the cytoplasm. The catalysed reaction is L-histidine = trans-urocanate + NH4(+). The protein operates within amino-acid degradation; L-histidine degradation into L-glutamate; N-formimidoyl-L-glutamate from L-histidine: step 1/3. The protein is Histidine ammonia-lyase of Bacillus anthracis.